We begin with the raw amino-acid sequence, 398 residues long: MESELKDLNSNSNPPSSKEDRPLLKSESDLAAAIEELDKKFAPYARTDLYGTMGLGPFPMTENIKLAVALVTLVPLRFLLSMSILLLYYLICRVFTLFSAPYRGPEEEEDEGGVVFQEDYAHMEGWKRTVIVRSGRFLSRVLLFVFGFYWIHESCPDRDSDMDSNPKTTSTEINQKGEAATEEPERPGAIVSNHVSYLDILYHMSASFPSFVAKRSVGKLPLVGLISKCLGCVYVQREAKSPDFKGVSGTVNERVREAHSNKSAPTIMLFPEGTTTNGDYLLTFKTGAFLAGTPVLPVILKYPYERFSVAWDTISGARHILFLLCQVVNHLEVIRLPVYYPSQEEKDDPKLYASNVRKLMATEGNLILSELGLSDKRIYHATLNGNLSQTRDFHQKEE.

The interval 1–24 (MESELKDLNSNSNPPSSKEDRPLL) is disordered. Ser28 is modified (phosphoserine). A helical membrane pass occupies residues 66–86 (LAVALVTLVPLRFLLSMSILL). The disordered stretch occupies residues 158–185 (RDSDMDSNPKTTSTEINQKGEAATEEPE). Over residues 163-174 (DSNPKTTSTEIN) the composition is skewed to polar residues. An HXXXXD motif motif is present at residues 194 to 199 (HVSYLD).

It belongs to the 1-acyl-sn-glycerol-3-phosphate acyltransferase family.

Its subcellular location is the endoplasmic reticulum membrane. It catalyses the reaction a 1-acyl-sn-glycero-3-phosphoethanolamine + an acyl-CoA = a 1,2-diacyl-sn-glycero-3-phosphoethanolamine + CoA. The catalysed reaction is a 1-acyl-sn-glycero-3-phosphate + an acyl-CoA = a 1,2-diacyl-sn-glycero-3-phosphate + CoA. It carries out the reaction a 1-acyl-sn-glycero-3-phosphocholine + an acyl-CoA = a 1,2-diacyl-sn-glycero-3-phosphocholine + CoA. The enzyme catalyses a 1-acyl-sn-glycero-3-phospho-L-serine + an acyl-CoA = a 1,2-diacyl-sn-glycero-3-phospho-L-serine + CoA. The protein operates within lipid metabolism; phospholipid metabolism. Functionally, possesses acyl-CoA-dependent lysophospholipid acyltransferase activity with a subset of lysophospholipids as substrates. Exhibits strong acylation activity on lysophosphatidylethanolamine (LPE) and lysophosphatidate (LPA), and lower activity on lysophosphatidylcholine (LPC) and lysophosphatidylserine (LPS). Exhibits acylation activity on both LPE and LPC. Has a preference for 18:1-LPE over 16:0-LPE as acceptor. Palmitoyl-CoA (16:0-CoA) is a better acyl donor than oleoyl-CoA (18:1-CoA). Among several different acyl-CoA species the best acyl donor is palmitoyl-CoA (16:0-CoA). Activity is calcium-independent. Its activity is essential for maintaining adequate levels of phosphatidylethanolamine (PE), LPE and LPC in the cells, which is crucial for plant growth regulation. The protein is Lysophospholipid acyltransferase LPEAT1 of Arabidopsis thaliana (Mouse-ear cress).